Here is a 764-residue protein sequence, read N- to C-terminus: Cyclin-F (764 aa).

The Nuclear localization signal 1 motif lies at 19–27 (RKRVRKRAS). The 48-residue stretch at 28–75 (AVSLLSLPEELLVFVLQCLSAEDLLSVRAVHSHLCDIIDTNASIWARV) folds into the F-box domain. Positions 307–404 (TKRYILVDWL…EVISVLDGKI (98 aa)) constitute a Cyclin N-terminal domain. The D box 1 motif lies at 309–312 (RYIL). A Nuclear localization signal 2 motif is present at residues 570-575 (SSKRRR). A PEST region spans residues 583-738 (RGAFVATPTA…PSQRIRRQVK (156 aa)). Residues 662-754 (CEEDEQEPPT…HSAGEAEQED (93 aa)) form a disordered region. Residues 682–692 (SSSSTSSSSSS) are compositionally biased toward low complexity. Residues 702–722 (SGYSSIQSFPSPTGSSALVSP) are compositionally biased toward polar residues. Over residues 732–742 (RIRRQVKRKNT) the composition is skewed to basic residues.

This sequence belongs to the cyclin family. Cyclin AB subfamily. Component of the SCF(CCNF) complex. In terms of tissue distribution, expressed in the brain.

The protein localises to the nucleus. The protein resides in the cytoplasm. It is found in the perinuclear region. Its subcellular location is the cytoskeleton. It localises to the microtubule organizing center. The protein localises to the centrosome. The protein resides in the centriole. In terms of biological role, substrate recognition component of a SCF (SKP1-CUL1-F-box protein) E3 ubiquitin-protein ligase complex which mediates the ubiquitination and subsequent proteasomal degradation of target proteins. The SCF(CCNF) E3 ubiquitin-protein ligase complex is an integral component of the ubiquitin proteasome system (UPS) and links proteasome degradation to the cell cycle. Mediates the substrate recognition and the proteasomal degradation of various target proteins during G2 phase involved in the regulation of cell cycle progression and in the maintenance of genome stability. May play a role in motor neuron development and axonal outgrowth. This Danio rerio (Zebrafish) protein is Cyclin-F (ccnf).